Consider the following 559-residue polypeptide: Apolipoprotein N-acyltransferase 2 (559 aa).

Helical transmembrane passes span 27 to 47 (LAGSSVLGLGALVPLYVGFLL), 53 to 73 (HVACSYGLFVALVHACSSFWL), 86 to 106 (ASTVGYFFYALPFGVAFACIL), 114 to 134 (ACAFALVWTLWEWVKSTGILA), 153 to 173 (IADITGVWGLSFLIPLANACV), and 187 to 207 (VPVFRLWLLTGCLYCLCSLYG). In terms of domain architecture, CN hydrolase spans 221-507 (LALAIVQQNA…SAVLHVPVYP (287 aa)). E288 functions as the Proton acceptor in the catalytic mechanism. K358 is a catalytic residue. The active-site Nucleophile is C416. Residues 519–539 (WVIVLCALIFFAEGVRMAVHT) traverse the membrane as a helical segment.

It belongs to the CN hydrolase family. Apolipoprotein N-acyltransferase subfamily.

It is found in the cell inner membrane. It catalyses the reaction N-terminal S-1,2-diacyl-sn-glyceryl-L-cysteinyl-[lipoprotein] + a glycerophospholipid = N-acyl-S-1,2-diacyl-sn-glyceryl-L-cysteinyl-[lipoprotein] + a 2-acyl-sn-glycero-3-phospholipid + H(+). It functions in the pathway protein modification; lipoprotein biosynthesis (N-acyl transfer). In terms of biological role, catalyzes the phospholipid dependent N-acylation of the N-terminal cysteine of apolipoprotein, the last step in lipoprotein maturation. In Treponema pallidum (strain Nichols), this protein is Apolipoprotein N-acyltransferase 2.